We begin with the raw amino-acid sequence, 142 residues long: MKGLVRLLTVFSLLLGCWGWLGTTQIAQAGSLQSFLVPQIPVLAIERQNRADAKLATEFGEKIDLNNTNVRAFQQYPGLYPTLAKKIIQNAPYGKVEDVLNLPGLSDGQKQLLQSNFDKFTVTELEPAFNEGDDRFNNGIYR.

A signal peptide spans 1–29 (MKGLVRLLTVFSLLLGCWGWLGTTQIAQA).

The protein belongs to the PsbU family. PSII is composed of 1 copy each of membrane proteins PsbA, PsbB, PsbC, PsbD, PsbE, PsbF, PsbH, PsbI, PsbJ, PsbK, PsbL, PsbM, PsbT, PsbX, PsbY, PsbZ, Psb30/Ycf12, peripheral proteins PsbO, CyanoQ (PsbQ), PsbU, PsbV and a large number of cofactors. It forms dimeric complexes.

It is found in the cellular thylakoid membrane. Its function is as follows. One of the extrinsic, lumenal subunits of photosystem II (PSII). PSII is a light-driven water plastoquinone oxidoreductase, using light energy to abstract electrons from H(2)O, generating a proton gradient subsequently used for ATP formation. The extrinsic proteins stabilize the structure of photosystem II oxygen-evolving complex (OEC), the ion environment of oxygen evolution and protect the OEC against heat-induced inactivation. The protein is Photosystem II extrinsic protein U of Nostoc sp. (strain PCC 7120 / SAG 25.82 / UTEX 2576).